A 119-amino-acid chain; its full sequence is MARVKRGIMVRKRHKKLLEQAKGYRGARSRHYKVAHEAVMHALADAYRDRRRRKRDFRRLWIMRINAAARLHGTTYSRLINSLKQANIEIDRKMLADLAVRDPQAFARIVEQAQAAVTA.

The protein belongs to the bacterial ribosomal protein bL20 family.

Binds directly to 23S ribosomal RNA and is necessary for the in vitro assembly process of the 50S ribosomal subunit. It is not involved in the protein synthesizing functions of that subunit. The protein is Large ribosomal subunit protein bL20 of Chloroflexus aurantiacus (strain ATCC 29366 / DSM 635 / J-10-fl).